Here is a 435-residue protein sequence, read N- to C-terminus: NADH-quinone oxidoreductase subunit D (435 aa).

This sequence belongs to the complex I 49 kDa subunit family. In terms of assembly, NDH-1 is composed of 14 different subunits. Subunits NuoB, C, D, E, F, and G constitute the peripheral sector of the complex.

Its subcellular location is the cell membrane. It catalyses the reaction a quinone + NADH + 5 H(+)(in) = a quinol + NAD(+) + 4 H(+)(out). Its function is as follows. NDH-1 shuttles electrons from NADH, via FMN and iron-sulfur (Fe-S) centers, to quinones in the respiratory chain. The immediate electron acceptor for the enzyme in this species is believed to be ubiquinone. Couples the redox reaction to proton translocation (for every two electrons transferred, four hydrogen ions are translocated across the cytoplasmic membrane), and thus conserves the redox energy in a proton gradient. This chain is NADH-quinone oxidoreductase subunit D, found in Stenotrophomonas maltophilia (strain K279a).